A 511-amino-acid chain; its full sequence is Sulfate adenylyltransferase (511 aa).

The segment at 1–167 (MPAPHGGILQ…LEAIQLPQHY (167 aa)) is N-terminal. The tract at residues 168-393 (DYPGLRKTPA…LRESNPPRPK (226 aa)) is catalytic. Sulfate is bound at residue Gln-195. Residues 195-198 (QTRN) and 289-292 (GRDH) contribute to the ATP site. Catalysis depends on residues Thr-196, Arg-197, and Asn-198. Arg-197 is a sulfate binding site. Sulfate is bound at residue Ala-293. Val-331 is an ATP binding site. Positions 394–511 (QGFSIVLGNS…FLEDNGFFVF (118 aa)) are required for oligomerization; adenylyl-sulfate kinase-like.

Belongs to the sulfate adenylyltransferase family. Homohexamer. Dimer of trimers.

Its subcellular location is the cytoplasm. The enzyme catalyses sulfate + ATP + H(+) = adenosine 5'-phosphosulfate + diphosphate. It functions in the pathway sulfur metabolism; hydrogen sulfide biosynthesis; sulfite from sulfate: step 1/3. Its function is as follows. Catalyzes the first intracellular reaction of sulfate assimilation, forming adenosine-5'-phosphosulfate (APS) from inorganic sulfate and ATP. Plays an important role in sulfate activation as a component of the biosynthesis pathway of sulfur-containing amino acids. The sequence is that of Sulfate adenylyltransferase from Saccharomyces cerevisiae (strain ATCC 204508 / S288c) (Baker's yeast).